We begin with the raw amino-acid sequence, 393 residues long: Arginine biosynthesis bifunctional protein ArgJ (393 aa).

The substrate site is built by T145, K171, T182, E265, N388, and S393. T182 acts as the Nucleophile in catalysis.

Belongs to the ArgJ family. As to quaternary structure, heterotetramer of two alpha and two beta chains.

Its subcellular location is the cytoplasm. The enzyme catalyses N(2)-acetyl-L-ornithine + L-glutamate = N-acetyl-L-glutamate + L-ornithine. It catalyses the reaction L-glutamate + acetyl-CoA = N-acetyl-L-glutamate + CoA + H(+). Its pathway is amino-acid biosynthesis; L-arginine biosynthesis; L-ornithine and N-acetyl-L-glutamate from L-glutamate and N(2)-acetyl-L-ornithine (cyclic): step 1/1. It participates in amino-acid biosynthesis; L-arginine biosynthesis; N(2)-acetyl-L-ornithine from L-glutamate: step 1/4. Functionally, catalyzes two activities which are involved in the cyclic version of arginine biosynthesis: the synthesis of N-acetylglutamate from glutamate and acetyl-CoA as the acetyl donor, and of ornithine by transacetylation between N(2)-acetylornithine and glutamate. The protein is Arginine biosynthesis bifunctional protein ArgJ of Nitratidesulfovibrio vulgaris (strain ATCC 29579 / DSM 644 / CCUG 34227 / NCIMB 8303 / VKM B-1760 / Hildenborough) (Desulfovibrio vulgaris).